We begin with the raw amino-acid sequence, 564 residues long: Dihydropyrimidinase-related protein 5 (564 aa).

Thr-509 and Thr-514 each carry phosphothreonine. Ser-532 and Ser-538 each carry phosphoserine. Arg-559 is subject to Omega-N-methylarginine.

The protein belongs to the metallo-dependent hydrolases superfamily. Hydantoinase/dihydropyrimidinase family. Homotetramer, and heterotetramer with other DPYS-like proteins. Interacts with DPYSL2, DPYSL3 and DPYSL4. Interacts with MAP2 and TUBB3. Highly expressed in embryonic and early postnatal brain and spinal cord.

The protein resides in the cytoplasm. In terms of biological role, involved in the negative regulation of dendrite outgrowth. In Rattus norvegicus (Rat), this protein is Dihydropyrimidinase-related protein 5 (Dpysl5).